The chain runs to 1079 residues: Electrogenic sodium bicarbonate cotransporter 1 (1079 aa).

A required for interaction with AHCYL1 region spans residues 1–62 (MEDEAVLDRG…EKKEKERISE (62 aa)). At 1–466 (MEDEAVLDRG…FASDFYDALN (466 aa)) the chain is on the cytoplasmic side. Position 2 is a phosphoserine (Glu2). Residue Tyr30 is modified to Phosphotyrosine. Residues 39-52 (YRRRRRHKRKAGHK) show a composition bias toward basic residues. A disordered region spans residues 39–78 (YRRRRRHKRKAGHKEKKEKERISENYSDKSDVENADESSS). The segment covering 53–70 (EKKEKERISENYSDKSDV) has biased composition (basic and acidic residues). A phosphoserine mark is found at Ser61, Ser65, Ser68, Ser223, Ser232, Ser233, and Ser245. Residues 235 to 266 (SRMFSNPDNGSPAMTHRNLTSSSLNDISDKPE) form a disordered region. Phosphothreonine is present on residues Thr249 and Thr254. Positions 251–260 (RNLTSSSLND) are enriched in polar residues. A phosphoserine mark is found at Ser256, Ser257, and Ser262. The chain crosses the membrane as a helical span at residues 467 to 491 (IQALSAILFIYLATVTNAITFGGLL). Residues 492–501 (GDATDNMQGV) lie on the Extracellular side of the membrane. The chain crosses the membrane as a helical span at residues 502 to 520 (LESFLGTAVSGAIFCLFAG). Position 521 (Gln521) is a topological domain, cytoplasmic. A discontinuously helical transmembrane segment spans residues 522 to 542 (PLTILSSTGPVLVFERLLFNF). Residues 543 to 550 (SKDHSFDY) lie on the Extracellular side of the membrane. The chain crosses the membrane as a helical span at residues 551-571 (LEFRLWIGLWSAFMCLILVAT). Over 572–585 (DASFLVQYFTRFTE) the chain is Cytoplasmic. The chain crosses the membrane as a helical span at residues 586 to 609 (EGFSSLISFIFIYDAFKKMIKLAD). N-linked (GlcNAc) asparagine glycans are attached at residues Ile597 and Phe617. Over 610 to 692 (YYPINSDFRV…GNNCDFVPDI (83 aa)) the chain is Extracellular. A helical transmembrane segment spans residues 693 to 710 (TLMSFILFLGTYTSSMAM). Residues 711–725 (KKFKTSRYFPTTARK) are Cytoplasmic-facing. A helical transmembrane segment spans residues 726-745 (LISDFAIILSILIFCVIDAL). Residues 746–779 (VGVDTPKLIVPSEFKPTSPHRGWFVPPFGGNPWW) lie on the Extracellular side of the membrane. Residues 748–779 (VDTPKLIVPSEFKPTSPHRGWFVPPFGGNPWW) are interaction with CA4. Residues 780-807 (VCLAAAIPALLVTILIFMDQQITAVIVN) traverse the membrane as a helical segment. Residues 808-819 (RKEHKLKKGAGY) lie on the Cytoplasmic side of the membrane. Residues 820–836 (HLDLFWVAILMVVCSFM) form a helical membrane-spanning segment. Residue Ala837 is a topological domain, extracellular. Residues 838 to 855 (LPWYVAATVISIAHIDSL) form a discontinuously helical membrane-spanning segment. The Cytoplasmic portion of the chain corresponds to 856–877 (KMETETSAPGEQPKFLGVREQR). The chain crosses the membrane as a helical span at residues 878–894 (VTGTLVFILTGLSVFMA). Topologically, residues 895–901 (PILKFIP) are extracellular. The chain crosses the membrane as a helical span at residues 902-918 (MPVLYGVFLYMGVASLN). Over 919–960 (GVQFMDRLKLLLMPLKHQPDFIYLRHVPLRRVHLFTSLQVLC) the chain is Cytoplasmic. The segment at residues 961–986 (LALLWILKSTVAAIIFPVMILALVAV) is an intramembrane region (discontinuously helical). Residues 987 to 1079 (RKGMDYLFSQ…STFLERHTSC (93 aa)) are Cytoplasmic-facing. The interval 1002 to 1004 (LDD) is CA2-binding. The tract at residues 1012–1079 (KKKEDEKKKK…STFLERHTSC (68 aa)) is disordered. Ser1026 and Ser1029 each carry phosphoserine. At Ser1026 the chain carries Phosphoserine; by PKA. The segment at 1030-1033 (DNDD) is CA2-binding. Phosphoserine occurs at positions 1034 and 1044. The tract at residues 1057-1059 (FLS) is required for basolateral targeting. Residues Asp1060, Leu1064, Ser1069, and Ser1078 each carry the phosphoserine modification. Residues 1062–1079 (KPLDRERSSTFLERHTSC) show a composition bias toward basic and acidic residues.

Belongs to the anion exchanger (TC 2.A.31) family. As to quaternary structure, homodimer. Interacts with CA2/carbonic anhydrase 2 and CA4/carbonic anhydrase 4 which may regulate transporter activity. Isoform 1 but not isoform 2 interacts with AHCYL1 (via PEST domain when phosphorylated); the interaction increases SLC4A4 isoform 1 activity. Interacts with AHCYL2. Post-translationally, phosphorylation of Ser-1026 by PKA increases the binding of CA2 and changes the Na(+):HCO3(-) stoichiometry of the transporter from 3:1 to 2:1. Phosphorylated in presence of STK39 and dephosphorylated in presence of PP1 phosphatase; phosphorylation seems to inhibit SLC4A4 activity. In terms of processing, N-glycosylation is not necessary for the transporter basic functions. Specifically expressed in kidney and to a lower extent in liver, lung, spleen, brain, skeletal muscle and heart. In kidney, expressed in proximal tubules at the corticomedullary junction. Isoform 2 is specifically expressed in kidney. Isoform 1 is expressed in kidney and pancreas while isoform 3 is specifically expressed in brain (at protein level). In brain, isoform 1 is expressed in astrocytes while isoform 3 is expressed in neurons (at protein level). In the eye, isoform 1 is expressed in cornea, conjunctiva, lens epithelium, ciliary bodies and retina while isoform 2 is detected only in the conjunctiva.

Its subcellular location is the basolateral cell membrane. The protein resides in the cell membrane. It catalyses the reaction 2 hydrogencarbonate(out) + Na(+)(out) = 2 hydrogencarbonate(in) + Na(+)(in). It carries out the reaction 3 hydrogencarbonate(out) + Na(+)(out) = 3 hydrogencarbonate(in) + Na(+)(in). Its activity is regulated as follows. Inhibited by 4,4'-diisothiocyanatostilbene-2,2'-disulfonic acid (DIDS). In terms of biological role, electrogenic sodium/bicarbonate cotransporter with a Na(+):HCO3(-) stoichiometry varying from 1:2 to 1:3. May regulate bicarbonate influx/efflux at the basolateral membrane of cells and regulate intracellular pH. The protein is Electrogenic sodium bicarbonate cotransporter 1 (Slc4a4) of Rattus norvegicus (Rat).